The chain runs to 691 residues: Elongation factor G (691 aa).

Residues 8-282 (ERVRNIGIAA…AVVDYLPAPI (275 aa)) enclose the tr-type G domain. GTP contacts are provided by residues 17-24 (AHIDAGKT), 81-85 (DTPGH), and 135-138 (NKMD).

Belongs to the TRAFAC class translation factor GTPase superfamily. Classic translation factor GTPase family. EF-G/EF-2 subfamily.

It is found in the cytoplasm. Functionally, catalyzes the GTP-dependent ribosomal translocation step during translation elongation. During this step, the ribosome changes from the pre-translocational (PRE) to the post-translocational (POST) state as the newly formed A-site-bound peptidyl-tRNA and P-site-bound deacylated tRNA move to the P and E sites, respectively. Catalyzes the coordinated movement of the two tRNA molecules, the mRNA and conformational changes in the ribosome. In Synechococcus sp. (strain CC9902), this protein is Elongation factor G.